The sequence spans 270 residues: Putative hydro-lyase Noca_0093 (270 aa).

It belongs to the D-glutamate cyclase family.

The protein is Putative hydro-lyase Noca_0093 of Nocardioides sp. (strain ATCC BAA-499 / JS614).